A 323-amino-acid polypeptide reads, in one-letter code: MSASSPAERRQRAQQLPPLRAEDDQAIQRFLDRLWAEQGVARQTLDSYRRDLEGLARWRDGAGGGLQGADRSALFDYLRWRTEARYAPRSNARLLSTLRGFYALCLRDGVRSDDPTALLDPPRLPRSLPKALTESQIDALLAAPEIGTPLGLRDRAMLELMYAAGLRVSELVTLPAVAINLRQGVLRVTGKGSKERLVPLGEESQHWLERYLETARPTLSERKAVPAVDGQVPLFIDAARRPLSRQQFWGLVKRYAAVAGIDPDTVSPHGLRHSFATHLLNHGADLRALQMLLGHSSLSTTQIYTLVARQHLQTLHARHHPRG.

A Core-binding (CB) domain is found at 21-106 (AEDDQAIQRF…TLRGFYALCL (86 aa)). The 191-residue stretch at 127-317 (SLPKALTESQ…ARQHLQTLHA (191 aa)) folds into the Tyr recombinase domain. Residues R167, K191, H269, R272, and H295 contribute to the active site. The O-(3'-phospho-DNA)-tyrosine intermediate role is filled by Y304.

Belongs to the 'phage' integrase family. XerD subfamily. In terms of assembly, forms a cyclic heterotetrameric complex composed of two molecules of XerC and two molecules of XerD.

It is found in the cytoplasm. Functionally, site-specific tyrosine recombinase, which acts by catalyzing the cutting and rejoining of the recombining DNA molecules. The XerC-XerD complex is essential to convert dimers of the bacterial chromosome into monomers to permit their segregation at cell division. It also contributes to the segregational stability of plasmids. The chain is Tyrosine recombinase XerD from Xanthomonas campestris pv. campestris (strain ATCC 33913 / DSM 3586 / NCPPB 528 / LMG 568 / P 25).